The following is a 382-amino-acid chain: Galactokinase (382 aa).

34–37 (EHTD) lines the substrate pocket. 124-130 (GAGLSSS) provides a ligand contact to ATP. Mg(2+) is bound by residues serine 130 and glutamate 162. The active-site Proton acceptor is aspartate 174. A substrate-binding site is contributed by tyrosine 223.

The protein belongs to the GHMP kinase family. GalK subfamily.

It localises to the cytoplasm. The enzyme catalyses alpha-D-galactose + ATP = alpha-D-galactose 1-phosphate + ADP + H(+). It functions in the pathway carbohydrate metabolism; galactose metabolism. Functionally, catalyzes the transfer of the gamma-phosphate of ATP to D-galactose to form alpha-D-galactose-1-phosphate (Gal-1-P). The chain is Galactokinase from Escherichia coli O81 (strain ED1a).